The sequence spans 2193 residues: MGSQVSTQRSGSHENSNSATEGSTINYTTINYYKDSYAATAGKQSLKQDPDKFANPVKDIFTEMAAPLKSPSAEACGYSDRVAQLTIGNSTITTQEAANIIVGYGEWPSYCSDDDATAVDKPTRPDVSVNRFYTLDTKLWEKSSKGWYWKFPDVLTETGVFGQNAQFHYLYRSGFCIHVQCNASKFHQGALLVAILPEYVIGTVAGGTGTEDSHPPYKQTQPGADGFELQHPYVLDAGIPISQLTVCPHQWINLRTNNCATIIVPYMNTLPFDSALNHCNFGLLVVPISPLDFDQGATPVIPITITLAPMCSEFGGLRQAVTQGFPTELKPGTNQFLTTDDGVSAPILPNFHPTPCIHIPGEVRNLLELCQVETILEVNNVPTNATSLMERLRFPVSAQAGKGELCAVFRADPGRDGPWQSTMLGQLCGYYTQWSGSLEVTFMFTGSFMATGKMLIAYTPPGGPLPKDRATAMLGTHVIWDFGLQSSVTLVIPWISNTHYRAHARDGVFDYYTTGLVSIWYQTNYVVPIGAPNTAYILALAAAQKNFTMKLCKDTSHILQTASIQGDRVADVIESSIGDSVSRALTQALPAPTGQNTQVSSHRLDTGEVPALQAAEIGASSNTSDESMIETRCVLNSHSTAETTLDSFFSRAGLVGEIDLPLEGTTNPNGYANWDIDITGYAQMRRKVELFTYMRFDAEFTFVACTPTGEVVPQLLQYMFVPPGAPKPESRESLAWQTATNPSVFVKLTDPPAQVSVPFMSPASAYQWFYDGYPTFGEHKQEKDLEYGACPNNMMGTFSVRTVGSSKSKYPLVVRIYMRMKHVRAWIPRPMRNQNYLFKANPNYAGNSIKPTGTSRNAITTLGKFGQQSGAIYVGNFRVVNRHLATHNDWANLVWEDSSRDLLVSSTTAQGCDTIARCNCQTGVYYCNSKRKHYPVSFSKPSLIYVEASEYYPARYQSHLMLAAGHSESGDCGGILRCQHGVVGIASTGGNGLVGFADVRDLLWLDEEAMEQGVSDYIKGLGDAFGTGFTDAVSREVEALRNHLIGSDGAVEKILKNLIKLISALVIVIRSDYDMVTLTATLALIGCHGSPWAWIKAKTASILGIPIAQKQSASWLKKFNDMASAAKGLEWISNKISKFIDWLREKIVPAAKEKAEFLTNLKQFPLLENQITHLEQSAASQEDLEAMFGNVSYLAHFCRKFQPLYATEAKRVYVLEKRMNNYMQFKSTHRIEPVCLIIRGSPGTGKSLATGIIARAIADKYHSSVYSLPPDPDHFDGYKQQVVTVMDDLCQNPDGKDMSLFYQMVSTVDIIPPMASLEEKGVSFTSKFVIASTNASNIIVPTVSDSDAIRRRFYMDCDIEVTDSSKTDLGRLDAGRAAKLCSENNTANFKRCSPLVCGKAIQLRDRKSKVRYSVDTVVSELIREYNSRSAIGNTIEALFQGPPKFRPIRISLEEKPAPDAISDLLASVDSEEVRQYCREQGWIIPETPTNVERHLNRAVLVMQSIATVVAVVSLVYVIYKLFAGFQGAYSGAPNQVLKKPVLRTATVQGPSLDFALSLLRRNIRQVQTDQGHFTMLGVRDRLAVLPRHSQPGKTIWVEHKLVNILDAAELVDEQGVNLELTLVTLDTNEKFRDITKFIPETISGASDATLVINTEHMPSMFVPVGDVVQYGFLNLSGKPTHRTMMYNFPTKAGQCGGVVTSVGKIIGIHIGGNGRQGFCAGLKRSYFASEQGEIQWVKSNKETGRLNINGPTRTKLEPSVFHDVFEANKEPAVLTSKDPRLEVDFEQALFSKYVGNVLHEPDEYVHQAALHYANQLKQLDINTKKMSMEEACYGTDNLEAIDLHTSAGYPYSALGIKKRDILDPATRDVSKMKSYMDKYGLDLPYSTYVKDELRSLDKIKKGKSRLIEASSLNDSVYLRMTFGHLYEVFHANPGTVTGSAVGCNPDVFWSKLPILLPGSLFAFDYSGYDASLSPVWFRALEVVLREIGYSEEAVSLIEGINHTHHIYRNKTYCVLGGMPSGCSGTSIFNSMINNIIIRTLLIKTFKGIDLDELNMVAYGDDVLASYPFPIDCLELAKTGKEYGLTMTPAGKSPCFNEVTWENATFLKRGFLPDHQFPFLIHPTMPMKEIHESIRWTKDARNTQDHVRSLCLLAWHNGKDEYEKFVSTIRSVPVGKALAIPNFENLRRNWLELF.

Residues 1-22 are disordered; the sequence is MGSQVSTQRSGSHENSNSATEG. Residue Gly-2 is the site of N-myristoyl glycine; by host attachment. The Cytoplasmic portion of the chain corresponds to 2-1503; that stretch reads GSQVSTQRSG…HLNRAVLVMQ (1502 aa). Positions 568–588 are amphipathic alpha-helix; that stretch reads RVADVIESSIGDSVSRALTQA. Catalysis depends on for protease 2A activity residues His-883 and Asp-901. Zn(2+) contacts are provided by Cys-918 and Cys-920. The active-site For protease 2A activity is Cys-972. Positions 978 and 980 each coordinate Zn(2+). The SF3 helicase domain occupies 1216–1374; the sequence is EKRMNNYMQF…SKTDLGRLDA (159 aa). An ATP-binding site is contributed by 1240–1247; that stretch reads GSPGTGKS. 3 residues coordinate Zn(2+): Cys-1381, Cys-1392, and Cys-1397. A C4-type; degenerate zinc finger spans residues 1381 to 1397; it reads CSENNTANFKRCSPLVC. Residues 1504-1519 lie within the membrane without spanning it; sequence SIATVVAVVSLVYVIY. The Cytoplasmic portion of the chain corresponds to 1520–2193; the sequence is KLFAGFQGAY…NLRRNWLELF (674 aa). Tyr-1529 is modified (O-(5'-phospho-RNA)-tyrosine). One can recognise a Peptidase C3 domain in the interval 1549-1727; it reads GPSLDFALSL…FCAGLKRSYF (179 aa). Active-site for protease 3C activity residues include His-1588, Glu-1619, and Cys-1695. The region spanning 1958-2073 is the RdRp catalytic domain; the sequence is GSLFAFDYSG…ASYPFPIDCL (116 aa). Mg(2+) contacts are provided by Asp-1964 and Asp-2060.

The protein belongs to the picornaviruses polyprotein family. Interacts with capsid protein VP1 and capsid protein VP3 to form heterotrimeric protomers. As to quaternary structure, interacts with capsid protein VP0, and capsid protein VP3 to form heterotrimeric protomers. Five protomers subsequently associate to form pentamers which serve as building blocks for the capsid. Interacts with capsid protein VP2, capsid protein VP3 and capsid protein VP4 following cleavage of capsid protein VP0. Interacts with host SCARB2. Interacts with host ARF6; this interaction mediates viral endocytosis. In terms of assembly, interacts with capsid protein VP1 and capsid protein VP3 in the mature capsid. Interacts with host SCARB2. Interacts with capsid protein VP0 and capsid protein VP1 to form heterotrimeric protomers. Five protomers subsequently associate to form pentamers which serve as building blocks for the capsid. Interacts with capsid protein VP4 in the mature capsid. Interacts with protein 2C; this interaction may be important for virion morphogenesis. As to quaternary structure, interacts with capsid protein VP1 and capsid protein VP3. In terms of assembly, homodimer. Interacts with host BAX; this interaction activates the mitochondrial apoptotic pathway. Interacts with host ILF2. As to quaternary structure, homohexamer; forms a hexameric ring structure with 6-fold symmetry characteristic of AAA+ ATPases. Interacts (via N-terminus) with host RTN3 (via reticulon domain); this interaction is important for viral replication. Interacts with capsid protein VP3; this interaction may be important for virion morphogenesis. In terms of assembly, interacts with protein 3CD. Homodimer. Interacts with host GBF1. Interacts (via GOLD domain) with host ACBD3 (via GOLD domain); this interaction allows the formation of a viral protein 3A/ACBD3 heterotetramer with a 2:2 stoichiometry, which will stimulate the recruitment of host PI4KB in order to synthesize PI4P at the viral RNA replication sites. As to quaternary structure, interacts with RNA-directed RNA polymerase. In terms of assembly, interacts with host IFIH1/MDA5; this interaction inhibits host IFIH1. Interacts with protein 3AB and with RNA-directed RNA polymerase. As to quaternary structure, interacts with Viral protein genome-linked and with protein 3CD. Requires Mg(2+) as cofactor. Specific enzymatic cleavages in vivo by the viral proteases yield processing intermediates and the mature proteins. In terms of processing, myristoylation is required for the formation of pentamers during virus assembly. Further assembly of 12 pentamers and a molecule of genomic RNA generates the provirion. Post-translationally, during virion maturation, immature virions are rendered infectious following cleavage of VP0 into VP4 and VP2. This maturation seems to be an autocatalytic event triggered by the presence of RNA in the capsid and it is followed by a conformational change infectious virion. Myristoylation is required during RNA encapsidation and formation of the mature virus particle. In terms of processing, VPg is uridylylated by the polymerase into VPg-pUpU. This acts as a nucleotide-peptide primer for the genomic RNA replication.

It is found in the virion. Its subcellular location is the host cytoplasm. The protein localises to the host cytoplasmic vesicle membrane. The protein resides in the host nucleus. It carries out the reaction a ribonucleoside 5'-triphosphate + H2O = a ribonucleoside 5'-diphosphate + phosphate + H(+). It catalyses the reaction Selective cleavage of Tyr-|-Gly bond in the picornavirus polyprotein.. The catalysed reaction is RNA(n) + a ribonucleoside 5'-triphosphate = RNA(n+1) + diphosphate. The enzyme catalyses Selective cleavage of Gln-|-Gly bond in the poliovirus polyprotein. In other picornavirus reactions Glu may be substituted for Gln, and Ser or Thr for Gly.. Its activity is regulated as follows. Replication or transcription is subject to high level of random mutations by the nucleotide analog ribavirin. In terms of biological role, forms an icosahedral capsid of pseudo T=3 symmetry with capsid proteins VP2 and VP3. The capsid is 300 Angstroms in diameter, composed of 60 copies of each capsid protein and enclosing the viral positive strand RNA genome. Capsid protein VP1 mainly forms the vertices of the capsid. Capsid protein VP1, together with VP2, interacts with host cell receptor SCARB2 to provide virion attachment to target host cells. This attachment induces virion internalization. After binding to its receptor, the capsid undergoes conformational changes. Capsid protein VP1 N-terminus (that contains an amphipathic alpha-helix) and capsid protein VP4 are externalized. Together, they shape a pore in the host membrane through which viral genome is translocated to host cell cytoplasm. Its function is as follows. Forms an icosahedral capsid of pseudo T=3 symmetry with capsid proteins VP2 and VP3. The capsid is 300 Angstroms in diameter, composed of 60 copies of each capsid protein and enclosing the viral positive strand RNA genome. Capsid protein VP2, together with VP1, interacts with host cell receptor SCARB2 to provide virion attachment to target host cells. Functionally, forms an icosahedral capsid of pseudo T=3 symmetry with capsid proteins VP2 and VP3. The capsid is 300 Angstroms in diameter, composed of 60 copies of each capsid protein and enclosing the viral positive strand RNA genome. Lies on the inner surface of the capsid shell. After binding to the host receptor, the capsid undergoes conformational changes. Capsid protein VP4 is released, Capsid protein VP1 N-terminus is externalized, and together, they shape a pore in the host membrane through which the viral genome is translocated into the host cell cytoplasm. In terms of biological role, component of immature procapsids, which is cleaved into capsid proteins VP4 and VP2 after maturation. Allows the capsid to remain inactive before the maturation step. Its function is as follows. Cysteine protease that cleaves viral polyprotein and specific host proteins. It is responsible for the autocatalytic cleavage between the P1 and P2 regions, which is the first cleavage occurring in the polyprotein. Also cleaves the host translation initiation factor EIF4G1, in order to shut down the capped cellular mRNA translation. Inhibits the host nucleus-cytoplasm protein and RNA trafficking by cleaving host members of the nuclear pores. Counteracts stress granule formation probably by antagonizing its assembly or promoting its dissassembly. Cleaves and inhibits host IFIH1/MDA5, thereby inhibiting the type-I IFN production and the establishment of the antiviral state. Cleaves and inhibits host MAVS, thereby inhibiting the type-I IFN production and the establishment of the antiviral state. Functionally, plays an essential role in the virus replication cycle by acting as a viroporin. Creates a pore in the host endoplasmic reticulum and as a consequence releases Ca2+ in the cytoplasm of infected cell. In turn, high levels of cytoplasmic calcium may trigger membrane trafficking and transport of viral ER-associated proteins to viroplasms, sites of viral genome replication. Induces and associates with structural rearrangements of intracellular membranes. Displays RNA-binding, nucleotide binding and NTPase activities. May play a role in virion morphogenesis and viral RNA encapsidation by interacting with the capsid protein VP3. In terms of biological role, localizes the viral replication complex to the surface of membranous vesicles. Together with protein 3CD binds the Cis-Active RNA Element (CRE) which is involved in RNA synthesis initiation. Acts as a cofactor to stimulate the activity of 3D polymerase, maybe through a nucleid acid chaperone activity. Its function is as follows. Localizes the viral replication complex to the surface of membranous vesicles. It inhibits host cell endoplasmic reticulum-to-Golgi apparatus transport and causes the disassembly of the Golgi complex, possibly through GBF1 interaction. This would result in depletion of MHC, trail receptors and IFN receptors at the host cell surface. Plays an essential role in viral RNA replication by recruiting ACBD3 and PI4KB at the viral replication sites, thereby allowing the formation of the rearranged membranous structures where viral replication takes place. Functionally, acts as a primer for viral RNA replication and remains covalently bound to viral genomic RNA. VPg is uridylylated prior to priming replication into VPg-pUpU. The oriI viral genomic sequence may act as a template for this. The VPg-pUpU is then used as primer on the genomic RNA poly(A) by the RNA-dependent RNA polymerase to replicate the viral genome. During genome replication, the VPg-RNA linkage is removed by the host TDP2, thereby accelerating replication. During the late stage of the replication cycle, host TDP2 is excluded from sites of viral RNA synthesis and encapsidation, allowing for the generation of progeny virions. Involved in the viral replication complex and viral polypeptide maturation. It exhibits protease activity with a specificity and catalytic efficiency that is different from protease 3C. Protein 3CD lacks polymerase activity. Protein 3CD binds to the 5'UTR of the viral genome. In terms of biological role, major viral protease that mediates proteolytic processing of the polyprotein. Cleaves host EIF5B, contributing to host translation shutoff. Also cleaves host PABPC1, contributing to host translation shutoff. Disassembles host cytoplasmic stress granules by cleaving host G3BP1, although this effect is less prononced than the inhibition induced by protease 2A. Cleaves host RIGI and thus contributes to the inhibition of type I interferon production. Cleaves host IRF7 and thus contributes to the inhibition of type I interferon production. Cleaves host HNRNPA1 thereby increasing the translation of apoptosis protease activating factor APAF1, leading to apoptosis of the host cell. Cleaves host NLRP1, triggers host N-glycine-mediated degradation of the autoinhibitory NLRP1 N-terminal fragment. Its function is as follows. Replicates the viral genomic RNA on the surface of intracellular membranes. May form linear arrays of subunits that propagate along a strong head-to-tail interaction called interface-I. Covalently attaches UMP to a tyrosine of VPg, which is used to prime RNA synthesis. The positive stranded RNA genome is first replicated at virus induced membranous vesicles, creating a dsRNA genomic replication form. This dsRNA is then used as template to synthesize positive stranded RNA genomes. ss(+)RNA genomes are either translated, replicated or encapsidated. The polypeptide is Genome polyprotein (Human enterovirus 71 (strain 7423/MS/87) (EV71)).